The chain runs to 352 residues: Holliday junction branch migration complex subunit RuvB (352 aa).

The segment at 13-201 (LPLRKKELRL…FGISQKIEFY (189 aa)) is large ATPase domain (RuvB-L). ATP is bound by residues arginine 41, glycine 82, lysine 85, threonine 86, threonine 87, 148-150 (EDF), arginine 191, tyrosine 201, and arginine 238. Threonine 86 provides a ligand contact to Mg(2+). The segment at 202–273 (NYDELKQILL…LIKKALNSYQ (72 aa)) is small ATPAse domain (RuvB-S). A head domain (RuvB-H) region spans residues 276–352 (DKGLDSLDRH…KYIDSKNDDF (77 aa)). 2 residues coordinate DNA: arginine 330 and arginine 335.

This sequence belongs to the RuvB family. As to quaternary structure, homohexamer. Forms an RuvA(8)-RuvB(12)-Holliday junction (HJ) complex. HJ DNA is sandwiched between 2 RuvA tetramers; dsDNA enters through RuvA and exits via RuvB. An RuvB hexamer assembles on each DNA strand where it exits the tetramer. Each RuvB hexamer is contacted by two RuvA subunits (via domain III) on 2 adjacent RuvB subunits; this complex drives branch migration. In the full resolvosome a probable DNA-RuvA(4)-RuvB(12)-RuvC(2) complex forms which resolves the HJ.

It localises to the cytoplasm. It carries out the reaction ATP + H2O = ADP + phosphate + H(+). The RuvA-RuvB-RuvC complex processes Holliday junction (HJ) DNA during genetic recombination and DNA repair, while the RuvA-RuvB complex plays an important role in the rescue of blocked DNA replication forks via replication fork reversal (RFR). RuvA specifically binds to HJ cruciform DNA, conferring on it an open structure. The RuvB hexamer acts as an ATP-dependent pump, pulling dsDNA into and through the RuvAB complex. RuvB forms 2 homohexamers on either side of HJ DNA bound by 1 or 2 RuvA tetramers; 4 subunits per hexamer contact DNA at a time. Coordinated motions by a converter formed by DNA-disengaged RuvB subunits stimulates ATP hydrolysis and nucleotide exchange. Immobilization of the converter enables RuvB to convert the ATP-contained energy into a lever motion, pulling 2 nucleotides of DNA out of the RuvA tetramer per ATP hydrolyzed, thus driving DNA branch migration. The RuvB motors rotate together with the DNA substrate, which together with the progressing nucleotide cycle form the mechanistic basis for DNA recombination by continuous HJ branch migration. Branch migration allows RuvC to scan DNA until it finds its consensus sequence, where it cleaves and resolves cruciform DNA. This Prochlorococcus marinus (strain MIT 9301) protein is Holliday junction branch migration complex subunit RuvB.